A 533-amino-acid polypeptide reads, in one-letter code: Lysophosphatidylcholine acyltransferase (533 aa).

Residues M1–R79 lie on the Cytoplasmic side of the membrane. Residues V80–G100 traverse the membrane as a helical; Signal-anchor for type II membrane protein segment. Over M101–N533 the chain is Lumenal. Residues H158–D163 carry the HXXXXD motif motif. EF-hand domains lie at L402 to K437, S439 to K474, and L475 to S510.

It belongs to the 1-acyl-sn-glycerol-3-phosphate acyltransferase family.

The protein localises to the endoplasmic reticulum membrane. It localises to the golgi apparatus membrane. The protein resides in the lipid droplet. The catalysed reaction is a 1-acyl-sn-glycero-3-phosphocholine + an acyl-CoA = a 1,2-diacyl-sn-glycero-3-phosphocholine + CoA. It functions in the pathway lipid metabolism; phospholipid metabolism. In terms of biological role, acetyltransferase which mediates the conversion of 1-acyl-sn-glycero-3-phosphocholine (LPC) into phosphatidylcholine (PC). Has a calcium-independent activity. Displays a clear preference for saturated fatty acyl-CoAs, and 1-myristoyl or 1-palmitoyl LPC as acyl donors and acceptors, respectively. Involved in the regulation of lipid droplet number and size. In Drosophila melanogaster (Fruit fly), this protein is Lysophosphatidylcholine acyltransferase.